Consider the following 208-residue polypeptide: Fibroblast growth factor-binding protein 2 (208 aa).

An N-terminal signal peptide occupies residues 1 to 19; that stretch reads MKRVALLFLVVICGMGGLG. Disulfide bonds link Cys43–Cys59, Cys68–Cys102, and Cys77–Cys113. The interval 130-181 is disordered; the sequence is EPEDGANRDKSSQKTSASVRGAGKSSVKKTGKPAVLPRIKPTQHGQGSENET. Cys191 and Cys199 are disulfide-bonded.

It belongs to the fibroblast growth factor-binding protein family.

The protein localises to the secreted. It localises to the extracellular space. The protein is Fibroblast growth factor-binding protein 2 (FGFBP2) of Gallus gallus (Chicken).